A 145-amino-acid chain; its full sequence is Deoxyuridine 5'-triphosphate nucleotidohydrolase (145 aa).

Residues 63-65, Asn-76, 80-82, and Lys-90 contribute to the substrate site; these read RSG and TID.

This sequence belongs to the dUTPase family. It depends on Mg(2+) as a cofactor.

It carries out the reaction dUTP + H2O = dUMP + diphosphate + H(+). It participates in pyrimidine metabolism; dUMP biosynthesis; dUMP from dCTP (dUTP route): step 2/2. Functionally, this enzyme is involved in nucleotide metabolism: it produces dUMP, the immediate precursor of thymidine nucleotides and it decreases the intracellular concentration of dUTP so that uracil cannot be incorporated into DNA. The polypeptide is Deoxyuridine 5'-triphosphate nucleotidohydrolase (Clostridium acetobutylicum (strain ATCC 824 / DSM 792 / JCM 1419 / IAM 19013 / LMG 5710 / NBRC 13948 / NRRL B-527 / VKM B-1787 / 2291 / W)).